The chain runs to 217 residues: uncharacterized protein (217 aa).

2 helical membrane passes run 151-171 and 177-197; these read LIPFINFFLLYHQIILSHSLF and ISFHFLFFSFLSFPLLSFILF.

The protein resides in the mitochondrion membrane. This is an uncharacterized protein from Schizosaccharomyces pombe (strain 972 / ATCC 24843) (Fission yeast).